The sequence spans 173 residues: Placenta-specific protein 1 (173 aa).

A signal peptide spans 1–23; that stretch reads MKLIKFLGGVVFFTLMFSGYSEQ.

This sequence belongs to the PLAC1 family.

The protein resides in the secreted. May play a role in placental development. This Rattus norvegicus (Rat) protein is Placenta-specific protein 1.